The primary structure comprises 561 residues: Arginine--tRNA ligase (561 aa).

The 'HIGH' region motif lies at 108–118 (PNVAKEMHVGH).

It belongs to the class-I aminoacyl-tRNA synthetase family. Monomer.

Its subcellular location is the cytoplasm. The enzyme catalyses tRNA(Arg) + L-arginine + ATP = L-arginyl-tRNA(Arg) + AMP + diphosphate. This is Arginine--tRNA ligase from Haemophilus ducreyi (strain 35000HP / ATCC 700724).